Consider the following 63-residue polypeptide: MKVTCVLVVLLLLLPYGDLLGNSVCDFGSCVHNGCYCEEHRPCCTPGSCSSWWPRCPGSMMDP.

An N-terminal signal peptide occupies residues 1 to 21; it reads MKVTCVLVVLLLLLPYGDLLG.

Belongs to the conotoxin O1 superfamily. Contains 4 disulfide bonds. Expressed by the venom duct.

Its subcellular location is the secreted. Its function is as follows. Probable neurotoxin. The protein is Conotoxin Cal12.5 of Californiconus californicus (California cone).